Reading from the N-terminus, the 942-residue chain is Leucine--tRNA ligase 1 (942 aa).

The 'HIGH' region signature appears at P39 to H49. The 'KMSKS' region motif lies at K624 to S628. K627 serves as a coordination point for ATP.

Belongs to the class-I aminoacyl-tRNA synthetase family.

The protein resides in the cytoplasm. The catalysed reaction is tRNA(Leu) + L-leucine + ATP = L-leucyl-tRNA(Leu) + AMP + diphosphate. The polypeptide is Leucine--tRNA ligase 1 (Sulfolobus acidocaldarius (strain ATCC 33909 / DSM 639 / JCM 8929 / NBRC 15157 / NCIMB 11770)).